A 244-amino-acid polypeptide reads, in one-letter code: tRNA pseudouridine synthase B (244 aa).

The Nucleophile role is filled by Asp46.

The protein belongs to the pseudouridine synthase TruB family. Type 1 subfamily.

The catalysed reaction is uridine(55) in tRNA = pseudouridine(55) in tRNA. In terms of biological role, responsible for synthesis of pseudouridine from uracil-55 in the psi GC loop of transfer RNAs. This is tRNA pseudouridine synthase B from Bordetella parapertussis (strain 12822 / ATCC BAA-587 / NCTC 13253).